The primary structure comprises 215 residues: Variable small protein 2 (215 aa).

The first 18 residues, 1 to 18 (MRKRISAIIMTLFMVFMS), serve as a signal peptide directing secretion. Cys19 carries the N-palmitoyl cysteine lipid modification. Cys19 carries the S-diacylglycerol cysteine lipid modification.

This sequence belongs to the variable small protein (Vsp) family.

It is found in the cell outer membrane. In terms of biological role, the Vlp and Vsp proteins are antigenically distinct proteins, only one vlp or vsp gene is transcriptionally active at any one time. Switching between these genes is a mechanism of host immune response evasion. This Borrelia hermsii protein is Variable small protein 2.